Reading from the N-terminus, the 120-residue chain is Large ribosomal subunit protein uL22 (120 aa).

The protein belongs to the universal ribosomal protein uL22 family. In terms of assembly, part of the 50S ribosomal subunit.

Its function is as follows. This protein binds specifically to 23S rRNA; its binding is stimulated by other ribosomal proteins, e.g. L4, L17, and L20. It is important during the early stages of 50S assembly. It makes multiple contacts with different domains of the 23S rRNA in the assembled 50S subunit and ribosome. In terms of biological role, the globular domain of the protein is located near the polypeptide exit tunnel on the outside of the subunit, while an extended beta-hairpin is found that lines the wall of the exit tunnel in the center of the 70S ribosome. The sequence is that of Large ribosomal subunit protein uL22 from Oenococcus oeni (strain ATCC BAA-331 / PSU-1).